We begin with the raw amino-acid sequence, 116 residues long: MRHRCNVPQLGRPADQRKALLRSLTTEIIRNGTVTTTKARAKAVRSEVERMVTLAKDGSLAARRQALGYIYDKQLVHLLFEQAPERYAKRQGGYTRILRTVRRRGDNAEMAIIELT.

This sequence belongs to the bacterial ribosomal protein bL17 family. In terms of assembly, part of the 50S ribosomal subunit. Contacts protein L32.

In Synechococcus elongatus (strain ATCC 33912 / PCC 7942 / FACHB-805) (Anacystis nidulans R2), this protein is Large ribosomal subunit protein bL17.